Here is a 354-residue protein sequence, read N- to C-terminus: Ornithine carbamoyltransferase, catabolic (354 aa).

Carbamoyl phosphate contacts are provided by residues 67 to 70 (STRT), Gln94, Arg118, and 145 to 148 (HPTQ). L-ornithine is bound by residues Asn177, Asp241, and 245-246 (SM). Carbamoyl phosphate-binding positions include 284 to 285 (CL) and Arg329.

Belongs to the aspartate/ornithine carbamoyltransferase superfamily. OTCase family.

The protein resides in the cytoplasm. It carries out the reaction carbamoyl phosphate + L-ornithine = L-citrulline + phosphate + H(+). It participates in amino-acid degradation; L-arginine degradation via ADI pathway; carbamoyl phosphate from L-arginine: step 2/2. Reversibly catalyzes the transfer of the carbamoyl group from carbamoyl phosphate (CP) to the N(epsilon) atom of ornithine (ORN) to produce L-citrulline. This is Ornithine carbamoyltransferase, catabolic (arcB) from Lactococcus lactis subsp. cremoris (Streptococcus cremoris).